Here is a 303-residue protein sequence, read N- to C-terminus: Ribosomal protein L11 methyltransferase (303 aa).

The S-adenosyl-L-methionine site is built by Thr144, Gly165, Asp187, and Asn235.

The protein belongs to the methyltransferase superfamily. PrmA family.

It is found in the cytoplasm. The catalysed reaction is L-lysyl-[protein] + 3 S-adenosyl-L-methionine = N(6),N(6),N(6)-trimethyl-L-lysyl-[protein] + 3 S-adenosyl-L-homocysteine + 3 H(+). Its function is as follows. Methylates ribosomal protein L11. This is Ribosomal protein L11 methyltransferase from Prochlorococcus marinus (strain MIT 9312).